Here is a 330-residue protein sequence, read N- to C-terminus: Spondin-2 (330 aa).

The N-terminal stretch at 1-25 is a signal peptide; it reads MENVSFSLDRTLWVFLLAMLGSTAG. The Spondin domain occupies 30 to 220; it reads GESVCTARPL…EITASSPSHP (191 aa). Cysteine 34 and cysteine 170 are disulfide-bonded. Residue glutamate 140 coordinates a divalent metal cation. Ca(2+)-binding residues include aspartate 159, aspartate 187, and aspartate 191. In terms of domain architecture, TSP type-1 spans 276–330; the sequence is DCEVSLWSSWGLCGGPCGKLGAKSRTRYVRVQPANNGTPCPELEEEAECAPDNCV. A C-linked (Man) tryptophan glycan is attached at tryptophan 282.

Monomer. Interacts with integrin. Abundantly expressed in the developing hippocampus.

It is found in the secreted. The protein localises to the extracellular space. It localises to the extracellular matrix. Functionally, cell adhesion protein that promotes adhesion and outgrowth of hippocampal embryonic neurons. Binds directly to bacteria and their components and functions as an opsonin for macrophage phagocytosis of bacteria. Essential in the initiation of the innate immune response and represents a unique pattern-recognition molecule in the ECM for microbial pathogens. This chain is Spondin-2 (Spon2), found in Rattus norvegicus (Rat).